We begin with the raw amino-acid sequence, 286 residues long: Citrullinase (286 aa).

The CN hydrolase domain occupies 4–258 (IKVAVVQLSF…DDILYATFDF (255 aa)). The active-site Proton acceptor is glutamate 43. The active site involves lysine 116. The active-site Nucleophile is the cysteine 153.

The protein belongs to the carbon-nitrogen hydrolase superfamily.

It carries out the reaction L-citrulline + H2O + 2 H(+) = L-ornithine + NH4(+) + CO2. In terms of biological role, catalyzes the degradation of citrulline into ornithine, carbon dioxide and ammonia. Contributes to intramacrophage survival, in vivo growth and pathogenesis. The polypeptide is Citrullinase (Francisella tularensis subsp. tularensis (strain SCHU S4 / Schu 4)).